The sequence spans 61 residues: Photosystem II reaction center protein K (61 aa).

Positions 1–24 (MLNIFNLICICFNSALFSSTFLVA) are excised as a propeptide. The helical transmembrane segment at 40 to 60 (MPVIPLFFLLLAFVWQAAVSF) threads the bilayer.

The protein belongs to the PsbK family. As to quaternary structure, PSII is composed of 1 copy each of membrane proteins PsbA, PsbB, PsbC, PsbD, PsbE, PsbF, PsbH, PsbI, PsbJ, PsbK, PsbL, PsbM, PsbT, PsbX, PsbY, PsbZ, Psb30/Ycf12, at least 3 peripheral proteins of the oxygen-evolving complex and a large number of cofactors. It forms dimeric complexes.

Its subcellular location is the plastid. The protein localises to the chloroplast thylakoid membrane. Its function is as follows. One of the components of the core complex of photosystem II (PSII). PSII is a light-driven water:plastoquinone oxidoreductase that uses light energy to abstract electrons from H(2)O, generating O(2) and a proton gradient subsequently used for ATP formation. It consists of a core antenna complex that captures photons, and an electron transfer chain that converts photonic excitation into a charge separation. The polypeptide is Photosystem II reaction center protein K (Sinapis alba (White mustard)).